A 358-amino-acid chain; its full sequence is NADH-quinone oxidoreductase subunit H (358 aa).

Helical transmembrane passes span 29-49, 95-115, 130-150, 176-196, 206-226, 258-280, 297-317, and 334-354; these read LIKI…LTLW, GLFY…WAVI, LLLV…AGWA, FCFL…IVAV, GLGF…VYLI, GFAI…AVVM, GWIW…WIRA, and IFIP…LSPW.

This sequence belongs to the complex I subunit 1 family. As to quaternary structure, NDH-1 is composed of 14 different subunits. Subunits NuoA, H, J, K, L, M, N constitute the membrane sector of the complex.

The protein localises to the cell inner membrane. The enzyme catalyses a quinone + NADH + 5 H(+)(in) = a quinol + NAD(+) + 4 H(+)(out). NDH-1 shuttles electrons from NADH, via FMN and iron-sulfur (Fe-S) centers, to quinones in the respiratory chain. The immediate electron acceptor for the enzyme in this species is believed to be ubiquinone. Couples the redox reaction to proton translocation (for every two electrons transferred, four hydrogen ions are translocated across the cytoplasmic membrane), and thus conserves the redox energy in a proton gradient. This subunit may bind ubiquinone. The protein is NADH-quinone oxidoreductase subunit H of Acidovorax sp. (strain JS42).